We begin with the raw amino-acid sequence, 915 residues long: Protein SLFN14 (915 aa).

The segment covering 157 to 167 (AAQRGRRRLHP) has biased composition (basic residues). The interval 157–176 (AAQRGRRRLHPPRASNSNLQ) is disordered. Residues 204–389 (ESTHVEFKRF…KVLEFKGALQ (186 aa)) are required for endoribonuclease activity. The segment at 390–569 (RHLFPVTQKT…QLGCEFFNLL (180 aa)) is required for ribosome binding.

As to quaternary structure, associates with ribosomes in an ATP-independent manner. Mg(2+) is required as a cofactor. It depends on Mn(2+) as a cofactor. Detected in reticulocytes (at protein level).

The protein localises to the nucleus. Its function is as follows. Shows no ribosome-associated and endoribonuclease activities. Functionally, displays polysome-associated endoribonuclease activity towards mRNAs and rRNAs. May play a role in RNA surveillance pathways by recognizing stalled ribosomes and triggering endonucleolytic cleavage of aberrant mRNAs. Cleaves RNAs in a magnesium-, manganese-dependent and ATP-independent manner. Involved in correct maturation of megakaryocytes and especially important for proplatelet extension. The sequence is that of Protein SLFN14 from Oryctolagus cuniculus (Rabbit).